Consider the following 477-residue polypeptide: Mitochondrial adenyl nucleotide antiporter SLC25A24 (477 aa).

The regulatory N-terminal domain stretch occupies residues 1–173; sequence MLRWLRDFVL…RFWKHSTGID (173 aa). Residues 1–197 are Mitochondrial intermembrane-facing; the sequence is MLRWLRDFVL…EKKSGQWWRQ (197 aa). EF-hand domains lie at 19–54, 55–88, 86–121, and 122–157; these read EQPT…LGIP, LGQD…KDHE, DHEK…LGLT, and ISEQ…NPVT. Ca(2+) contacts are provided by Asp32, Asn34, Asp36, Val38, Glu43, Asp68, Asn70, Asp72, Lys74, Glu79, Asp99, Asn101, Asp103, Lys105, Glu110, Asp135, Asp137, Thr139, Thr141, and Glu146. Residues 159-168 form a linker region region; that stretch reads IEEIIRFWKH. The tract at residues 174-477 is C-terminal transmembrane transporter domain; sequence IGDSLTIPDE…MKQTLGVTQK (304 aa). Solcar repeat units follow at residues 192–278, 286–371, and 383–471; these read GQWW…YKKL, IGTF…LKSY, and PGVM…MKQT. The chain crosses the membrane as a helical span at residues 198–215; that stretch reads LLAGGIAGAVSRTSTAPL. Topologically, residues 216–252 are mitochondrial matrix; it reads DRLKIMMQVHGSKSDKMNIFGGFRQMVKEGGIRSLWR. A helical membrane pass occupies residues 253-272; that stretch reads GNGTNVIKIAPETAVKFWAY. Residues 273–295 are Mitochondrial intermembrane-facing; the sequence is EQYKKLLTEEGQKIGTFERFISG. A helical membrane pass occupies residues 296 to 309; sequence SMAGATAQTFIYPM. Over 310 to 345 the chain is Mitochondrial matrix; it reads EVMKTRLAVGKTGQYSGIYDCAKKILKHEGLGAFYK. At Lys320 the chain carries N6-acetyllysine; alternate. At Lys320 the chain carries N6-succinyllysine; alternate. Lys336 carries the post-translational modification N6-acetyllysine. A helical membrane pass occupies residues 346-365; sequence GYVPNLLGIIPYAGIDLAVY. At 366-388 the chain is on the mitochondrial intermembrane side; that stretch reads ELLKSYWLDNFAKDSVNPGVMVL. Residues 389–406 traverse the membrane as a helical segment; that stretch reads LGCGALSSTCGQLASYPL. Topologically, residues 407-445 are mitochondrial matrix; that stretch reads ALVRTRMQAQAMLEGSPQLNMVGLFRRIISKEGIPGLYR. At Lys437 the chain carries N6-acetyllysine; alternate. Lys437 is subject to N6-succinyllysine; alternate. The chain crosses the membrane as a helical span at residues 446 to 465; that stretch reads GITPNFMKVLPAVGISYVVY. The Mitochondrial intermembrane segment spans residues 466–477; it reads ENMKQTLGVTQK.

This sequence belongs to the mitochondrial carrier (TC 2.A.29) family. Monomer. As to expression, expressed in all tissues tested. Highly expressed in testis, expressed at intermediate level in small intestine and pancreas, and weakly expressed in kidney, spleen, liver, skeletal muscle and heart.

The protein localises to the mitochondrion inner membrane. The enzyme catalyses Mg(2+)(out) + phosphate(in) + ATP(out) = Mg(2+)(in) + phosphate(out) + ATP(in). It catalyses the reaction ADP(out) + phosphate(in) + H(+)(out) = ADP(in) + phosphate(out) + H(+)(in). It carries out the reaction AMP(out) + phosphate(in) = AMP(in) + phosphate(out). The catalysed reaction is phosphate(in) + ATP(out) + 2 H(+)(out) = phosphate(out) + ATP(in) + 2 H(+)(in). The enzyme catalyses dADP(in) + ADP(out) = dADP(out) + ADP(in). It catalyses the reaction Mg(2+)(in) + ADP(out) + ATP(in) + H(+)(out) = Mg(2+)(out) + ADP(in) + ATP(out) + H(+)(in). It carries out the reaction ADP(out) + diphosphate(in) = ADP(in) + diphosphate(out). The catalysed reaction is dAMP(in) + ADP(out) + H(+)(out) = dAMP(out) + ADP(in) + H(+)(in). The enzyme catalyses 3'-AMP(in) + ADP(out) + H(+)(out) = 3'-AMP(out) + ADP(in) + H(+)(in). It catalyses the reaction dAMP(out) + phosphate(in) = dAMP(in) + phosphate(out). It carries out the reaction 3'-AMP(out) + phosphate(in) = 3'-AMP(in) + phosphate(out). The catalysed reaction is dADP(out) + phosphate(in) + H(+)(out) = dADP(in) + phosphate(out) + H(+)(in). With respect to regulation, activated by an increase in cytosolic calcium levels that induce a conformational change of the N-terminal regulatory domain, uncapping the channel and allowing transport. Inhibited by bathophenanthroline, mersalyl, p-hydroxymercuribenzoate, bromcresol purple and tannic acid. Electroneutral antiporter that mediates the transport of adenyl nucleotides through the inner mitochondrial membrane. Originally identified as an ATP-magnesium/inorganic phosphate antiporter, it also acts as a broad specificity adenyl nucleotide antiporter. By regulating the mitochondrial matrix adenyl nucleotide pool could adapt to changing cellular energetic demands and indirectly regulate adenyl nucleotide-dependent metabolic pathways. In vitro, a low activity is also observed with guanyl and pyrimidine nucleotides. May play a role in protecting cells against oxidative stress-induced cell death, by buffering calcium levels in the mitochondrial matrix through the formation of calcium-phosphate precipitates. The chain is Mitochondrial adenyl nucleotide antiporter SLC25A24 from Homo sapiens (Human).